The following is a 490-amino-acid chain: Aspartyl/glutamyl-tRNA(Asn/Gln) amidotransferase subunit B (490 aa).

Belongs to the GatB/GatE family. GatB subfamily. Heterotrimer of A, B and C subunits.

The enzyme catalyses L-glutamyl-tRNA(Gln) + L-glutamine + ATP + H2O = L-glutaminyl-tRNA(Gln) + L-glutamate + ADP + phosphate + H(+). It carries out the reaction L-aspartyl-tRNA(Asn) + L-glutamine + ATP + H2O = L-asparaginyl-tRNA(Asn) + L-glutamate + ADP + phosphate + 2 H(+). Allows the formation of correctly charged Asn-tRNA(Asn) or Gln-tRNA(Gln) through the transamidation of misacylated Asp-tRNA(Asn) or Glu-tRNA(Gln) in organisms which lack either or both of asparaginyl-tRNA or glutaminyl-tRNA synthetases. The reaction takes place in the presence of glutamine and ATP through an activated phospho-Asp-tRNA(Asn) or phospho-Glu-tRNA(Gln). This chain is Aspartyl/glutamyl-tRNA(Asn/Gln) amidotransferase subunit B, found in Burkholderia vietnamiensis (strain G4 / LMG 22486) (Burkholderia cepacia (strain R1808)).